We begin with the raw amino-acid sequence, 98 residues long: Putative protein adenylyltransferase MJ1217 (98 aa).

The GSX(10)DXD motif signature appears at 31-45; it reads GSYAREEQKETSDID. Mg(2+)-binding residues include Asp-43, Asp-45, and Asp-75.

This sequence belongs to the MntA antitoxin family. As to quaternary structure, probably forms a complex with cognate toxin MJ1216. Mg(2+) serves as cofactor.

It catalyses the reaction L-tyrosyl-[protein] + ATP = O-(5'-adenylyl)-L-tyrosyl-[protein] + diphosphate. The catalysed reaction is O-(5'-adenylyl)-L-tyrosyl-[protein] + ATP = O-[5'-(adenylyl-(5'-&gt;3')-adenylyl)]-L-tyrosyl-[protein] + diphosphate. Functionally, probable antitoxin component of a putative type VII toxin-antitoxin (TA) system. Neutralizes cognate toxic MJ1216 by di-AMPylation. The polypeptide is Putative protein adenylyltransferase MJ1217 (Methanocaldococcus jannaschii (strain ATCC 43067 / DSM 2661 / JAL-1 / JCM 10045 / NBRC 100440) (Methanococcus jannaschii)).